A 90-amino-acid polypeptide reads, in one-letter code: Molybdopterin synthase sulfur carrier subunit (90 aa).

G90 carries the 1-thioglycine; alternate modification. Glycyl adenylate; alternate is present on G90.

The protein belongs to the MoaD family. MOCS2A subfamily. In terms of assembly, heterotetramer; composed of 2 small (Mocs2A) and 2 large (Mocs2B) subunits. C-terminal thiocarboxylation occurs in 2 steps, it is first acyl-adenylated (-COAMP) via the hesA/moeB/thiF part of MOCS3, then thiocarboxylated (-COSH) via the rhodanese domain of MOCS3.

It is found in the cytoplasm. It participates in cofactor biosynthesis; molybdopterin biosynthesis. Acts as a sulfur carrier required for molybdopterin biosynthesis. Component of the molybdopterin synthase complex that catalyzes the conversion of precursor Z into molybdopterin by mediating the incorporation of 2 sulfur atoms into precursor Z to generate a dithiolene group. In the complex, serves as sulfur donor by being thiocarboxylated (-COSH) at its C-terminus by MOCS3. After interaction with Mocs2B, the sulfur is then transferred to precursor Z to form molybdopterin. The chain is Molybdopterin synthase sulfur carrier subunit from Drosophila erecta (Fruit fly).